The chain runs to 279 residues: uncharacterized protein (279 aa).

Residues 1–29 (MSSRYTSSYTPSSRYGSGWDYSSSYSSSR) show a composition bias toward low complexity. Disordered regions lie at residues 1–111 (MSSR…APRE) and 137–233 (LTLA…AEAL). Over residues 30–44 (TSRDRDTGSYRDRDY) the composition is skewed to basic and acidic residues. The segment covering 45–59 (SSTSYTSTRPRYSTY) has biased composition (low complexity). The segment covering 142–153 (EPEESEEEEDDE) has biased composition (acidic residues). A compositionally biased stretch (low complexity) spans 170-186 (ESSPVSSPVKEVSSAAS). Residues 189 to 205 (ANDNGNETENRTPSPTV) show a composition bias toward polar residues. Residues 221–233 (SDVKKEGGDAEAL) show a composition bias toward basic and acidic residues.

This is an uncharacterized protein from Caenorhabditis elegans.